Consider the following 155-residue polypeptide: Ribosomal RNA large subunit methyltransferase H (155 aa).

Residues Leu72, Gly103, and 122–127 (LSALTL) contribute to the S-adenosyl-L-methionine site.

This sequence belongs to the RNA methyltransferase RlmH family. Homodimer.

It localises to the cytoplasm. It catalyses the reaction pseudouridine(1915) in 23S rRNA + S-adenosyl-L-methionine = N(3)-methylpseudouridine(1915) in 23S rRNA + S-adenosyl-L-homocysteine + H(+). Its function is as follows. Specifically methylates the pseudouridine at position 1915 (m3Psi1915) in 23S rRNA. In Shigella boydii serotype 18 (strain CDC 3083-94 / BS512), this protein is Ribosomal RNA large subunit methyltransferase H.